Here is a 198-residue protein sequence, read N- to C-terminus: Dephospho-CoA kinase (198 aa).

Positions 4 to 198 (IIGITGGIAS…DSQLRRLQNE (195 aa)) constitute a DPCK domain. Residue 12-17 (ASGKST) coordinates ATP.

Belongs to the CoaE family.

It is found in the cytoplasm. The catalysed reaction is 3'-dephospho-CoA + ATP = ADP + CoA + H(+). It participates in cofactor biosynthesis; coenzyme A biosynthesis; CoA from (R)-pantothenate: step 5/5. Functionally, catalyzes the phosphorylation of the 3'-hydroxyl group of dephosphocoenzyme A to form coenzyme A. The sequence is that of Dephospho-CoA kinase from Streptococcus mutans serotype c (strain ATCC 700610 / UA159).